The primary structure comprises 249 residues: ATP synthase subunit a (249 aa).

6 consecutive transmembrane segments (helical) span residues 29–49 (ASLF…FATS), 84–104 (FFPF…LGMF), 114–134 (IIVT…YGFY), 140–160 (FFGI…VASI), 193–213 (FVAS…LPLI), and 216–236 (VAMT…FAVL).

This sequence belongs to the ATPase A chain family. F-type ATPases have 2 components, CF(1) - the catalytic core - and CF(0) - the membrane proton channel. CF(1) has five subunits: alpha(3), beta(3), gamma(1), delta(1), epsilon(1). CF(0) has three main subunits: a(1), b(2) and c(9-12). The alpha and beta chains form an alternating ring which encloses part of the gamma chain. CF(1) is attached to CF(0) by a central stalk formed by the gamma and epsilon chains, while a peripheral stalk is formed by the delta and b chains.

The protein resides in the cell inner membrane. Functionally, key component of the proton channel; it plays a direct role in the translocation of protons across the membrane. This chain is ATP synthase subunit a, found in Agrobacterium fabrum (strain C58 / ATCC 33970) (Agrobacterium tumefaciens (strain C58)).